Here is a 267-residue protein sequence, read N- to C-terminus: Coiled-coil domain-containing protein 172 (267 aa).

Coiled-coil stretches lie at residues 24 to 97 (MREV…CEAI) and 128 to 191 (LMKE…EETE).

Belongs to the CCDC172 family. May interact with TEKT2.

It localises to the cytoplasm. The protein localises to the cell projection. Its subcellular location is the cilium. The polypeptide is Coiled-coil domain-containing protein 172 (Ccdc172) (Mus musculus (Mouse)).